The chain runs to 248 residues: Uridylate kinase (248 aa).

11 to 14 contributes to the ATP binding site; sequence KISG. Position 53 (glycine 53) interacts with UMP. Residues glycine 54 and arginine 58 each contribute to the ATP site. UMP-binding positions include aspartate 74 and 135–142; that span reads AGSPYLTT. Residues threonine 162, tyrosine 169, and aspartate 172 each coordinate ATP.

Belongs to the UMP kinase family. Homohexamer.

The protein resides in the cytoplasm. It catalyses the reaction UMP + ATP = UDP + ADP. It functions in the pathway pyrimidine metabolism; CTP biosynthesis via de novo pathway; UDP from UMP (UMPK route): step 1/1. Inhibited by UTP. In terms of biological role, catalyzes the reversible phosphorylation of UMP to UDP. This is Uridylate kinase from Chlamydia pneumoniae (Chlamydophila pneumoniae).